Consider the following 349-residue polypeptide: Ion-translocating oxidoreductase complex subunit D (349 aa).

The next 3 helical transmembrane spans lie at 36–56 (CAFF…VALS), 77–99 (SAML…WMIV), and 124–144 (AMAA…SWIA). Residue Thr-185 is modified to FMN phosphoryl threonine. A run of 5 helical transmembrane segments spans residues 212-232 (GTGV…LVLL), 239-259 (WHIS…GFLL), 265-285 (ASPL…FIAT), 291-311 (ATSP…VYVI), and 315-335 (GGYP…APFI).

The protein belongs to the NqrB/RnfD family. The complex is composed of six subunits: RnfA, RnfB, RnfC, RnfD, RnfE and RnfG. FMN is required as a cofactor.

The protein localises to the cell inner membrane. Its function is as follows. Part of a membrane-bound complex that couples electron transfer with translocation of ions across the membrane. This chain is Ion-translocating oxidoreductase complex subunit D, found in Shewanella sp. (strain MR-4).